The sequence spans 102 residues: Small ribosomal subunit protein uS10 (102 aa).

The protein belongs to the universal ribosomal protein uS10 family. Part of the 30S ribosomal subunit.

Involved in the binding of tRNA to the ribosomes. The polypeptide is Small ribosomal subunit protein uS10 (Streptococcus thermophilus (strain ATCC BAA-491 / LMD-9)).